Consider the following 438-residue polypeptide: Transposon Ty2-LR2 Gag polyprotein (438 aa).

Composition is skewed to polar residues over residues 1–11 (MESQQLHQNPH), 19–39 (ASVTSKEVPSNQDPLAVSASN), and 49–60 (KVNSQEETTPGT). Disordered stretches follow at residues 1–88 (MESQ…YQQH), 364–397 (KNVSRTSPNTTNTKVTTRNYHRTNSSKPRAAKAH), and 418–438 (VSSQYLSDDNELSLRPATERI). Residues 295-397 (ENNINVSDRL…SSKPRAAKAH (103 aa)) are RNA-binding. The segment covering 369–381 (TSPNTTNTKVTTR) has biased composition (low complexity).

As to quaternary structure, homotrimer.

The protein localises to the cytoplasm. Functionally, capsid protein (CA) is the structural component of the virus-like particle (VLP), forming the shell that encapsulates the retrotransposons dimeric RNA genome. The particles are assembled from trimer-clustered units and there are holes in the capsid shells that allow for the diffusion of macromolecules. CA also has nucleocapsid-like chaperone activity, promoting primer tRNA(i)-Met annealing to the multipartite primer-binding site (PBS), dimerization of Ty2 RNA and initiation of reverse transcription. This Saccharomyces cerevisiae (strain ATCC 204508 / S288c) (Baker's yeast) protein is Transposon Ty2-LR2 Gag polyprotein (TY2A-LR2).